Consider the following 146-residue polypeptide: Bifunctional adenosine 5'-phosphosulfate phosphorylase/adenylylsulfatase HINT4 (146 aa).

The region spanning 9–120 (IFCEIVRNPT…YVPRWKAIKY (112 aa)) is the HIT domain. Residues 101-105 (HLHLH) carry the Histidine triad motif motif. The active-site Tele-AMP-histidine intermediate is the histidine 105.

In terms of assembly, homodimer.

The protein localises to the peroxisome. It catalyses the reaction sulfate + ADP + H(+) = adenosine 5'-phosphosulfate + phosphate. It carries out the reaction adenosine 5'-phosphosulfate + H2O = sulfate + AMP + 2 H(+). With respect to regulation, the adenosine 5'-phosphosulfate phosphorylase activity is enhanced at low pH. In terms of biological role, possesses adenylylsulfatase activity in vitro, releasing AMP and sulfate from adenylyl sulfate. Also possesses adenosine 5'-phosphosulfate (APS) phosphorylase activity in vitro. Catalyzes the phosphorolysis of APS, leading to ADP and sulfate. This chain is Bifunctional adenosine 5'-phosphosulfate phosphorylase/adenylylsulfatase HINT4, found in Arabidopsis thaliana (Mouse-ear cress).